Consider the following 793-residue polypeptide: Nuclear cap-binding protein subunit 1 (793 aa).

One can recognise an MIF4G domain in the interval 28–242 (EKKLQEVIGK…SLSAQIENLR (215 aa)).

This sequence belongs to the NCBP1 family. As to quaternary structure, component of the nuclear cap-binding complex (CBC), a heterodimer composed of ncbp-1 and ncbp-1 that interacts with m7GpppG-capped RNA.

The protein resides in the nucleus. Component of the cap-binding complex (CBC), which binds cotranscriptionally to the 5'-cap of pre-mRNAs and is involved in various processes such as pre-mRNA splicing and RNA-mediated gene silencing (RNAi). The CBC complex is involved in miRNA-mediated RNA interference and is required for primary microRNAs (miRNAs) processing. In the CBC complex, ncbp-1 does not bind directly capped RNAs (m7GpppG-capped RNA) but is required to stabilize the movement of the N-terminal loop of ncbp-2 and lock the CBC into a high affinity cap-binding state with the cap structure. In Caenorhabditis briggsae, this protein is Nuclear cap-binding protein subunit 1 (ncbp-1).